The following is a 163-amino-acid chain: 3-hydroxyacyl-[acyl-carrier-protein] dehydratase FabZ (163 aa).

The active site involves H64.

Belongs to the thioester dehydratase family. FabZ subfamily.

The protein resides in the cytoplasm. The enzyme catalyses a (3R)-hydroxyacyl-[ACP] = a (2E)-enoyl-[ACP] + H2O. In terms of biological role, involved in unsaturated fatty acids biosynthesis. Catalyzes the dehydration of short chain beta-hydroxyacyl-ACPs and long chain saturated and unsaturated beta-hydroxyacyl-ACPs. The sequence is that of 3-hydroxyacyl-[acyl-carrier-protein] dehydratase FabZ from Caulobacter sp. (strain K31).